Reading from the N-terminus, the 318-residue chain is NADH-ubiquinone oxidoreductase chain 1 (318 aa).

The next 8 membrane-spanning stretches (helical) occupy residues 2–22 (FMINLFLLIIPILLAMAFLTL), 76–96 (TLALTIALVTWIPLPLPYPLI), 102–122 (LLFILATSSLAVYSILWSGWA), 146–166 (LAIILLSLLLMNGSFTLSTLI), 171–191 (YLWLIIPSWPLAMMWFISTLA), 217–237 (AGPFALFFMAEYTNIIMMNAL), 253–273 (ETYTTSFAIKTLLLTILFLWV), and 294–314 (LPLTLALCMWYVSLPVLASCI).

This sequence belongs to the complex I subunit 1 family. Core subunit of respiratory chain NADH dehydrogenase (Complex I) which is composed of 45 different subunits.

It localises to the mitochondrion inner membrane. The enzyme catalyses a ubiquinone + NADH + 5 H(+)(in) = a ubiquinol + NAD(+) + 4 H(+)(out). Functionally, core subunit of the mitochondrial membrane respiratory chain NADH dehydrogenase (Complex I) which catalyzes electron transfer from NADH through the respiratory chain, using ubiquinone as an electron acceptor. Essential for the catalytic activity and assembly of complex I. This chain is NADH-ubiquinone oxidoreductase chain 1 (MT-ND1), found in Lemur catta (Ring-tailed lemur).